The chain runs to 698 residues: Polyribonucleotide nucleotidyltransferase (698 aa).

Positions 488 and 494 each coordinate Mg(2+). In terms of domain architecture, KH spans 555-614 (PRLLTIRIDPDKIRDVIGKGGATIRALTEETGTTIDISDDGKVTIASADKAAADEARRRI). The region spanning 624 to 692 (GTVYEGKVSK…RQGRIRLSMK (69 aa)) is the S1 motif domain.

It belongs to the polyribonucleotide nucleotidyltransferase family. Component of the RNA degradosome, which is a multiprotein complex involved in RNA processing and mRNA degradation. Mg(2+) serves as cofactor.

It is found in the cytoplasm. It catalyses the reaction RNA(n+1) + phosphate = RNA(n) + a ribonucleoside 5'-diphosphate. Its function is as follows. Involved in mRNA degradation. Catalyzes the phosphorolysis of single-stranded polyribonucleotides processively in the 3'- to 5'-direction. The sequence is that of Polyribonucleotide nucleotidyltransferase from Alkalilimnicola ehrlichii (strain ATCC BAA-1101 / DSM 17681 / MLHE-1).